The chain runs to 342 residues: tRNA N6-adenosine threonylcarbamoyltransferase (342 aa).

Positions 111 and 115 each coordinate Fe cation. Residues 133 to 137 (AVSGG), Asp166, Gly179, Asp183, and Asn273 contribute to the substrate site. Asp301 provides a ligand contact to Fe cation.

Belongs to the KAE1 / TsaD family. Fe(2+) is required as a cofactor.

Its subcellular location is the cytoplasm. It carries out the reaction L-threonylcarbamoyladenylate + adenosine(37) in tRNA = N(6)-L-threonylcarbamoyladenosine(37) in tRNA + AMP + H(+). Its function is as follows. Required for the formation of a threonylcarbamoyl group on adenosine at position 37 (t(6)A37) in tRNAs that read codons beginning with adenine. Is involved in the transfer of the threonylcarbamoyl moiety of threonylcarbamoyl-AMP (TC-AMP) to the N6 group of A37, together with TsaE and TsaB. TsaD likely plays a direct catalytic role in this reaction. This Syntrophotalea carbinolica (strain DSM 2380 / NBRC 103641 / GraBd1) (Pelobacter carbinolicus) protein is tRNA N6-adenosine threonylcarbamoyltransferase.